Consider the following 609-residue polypeptide: Isocitrate dehydrogenase kinase/phosphatase (609 aa).

ATP is bound by residues Ala-325–Met-331 and Lys-346. The active site involves Asp-381.

This sequence belongs to the AceK family.

It is found in the cytoplasm. The enzyme catalyses L-seryl-[isocitrate dehydrogenase] + ATP = O-phospho-L-seryl-[isocitrate dehydrogenase] + ADP + H(+). In terms of biological role, bifunctional enzyme which can phosphorylate or dephosphorylate isocitrate dehydrogenase (IDH) on a specific serine residue. This is a regulatory mechanism which enables bacteria to bypass the Krebs cycle via the glyoxylate shunt in response to the source of carbon. When bacteria are grown on glucose, IDH is fully active and unphosphorylated, but when grown on acetate or ethanol, the activity of IDH declines drastically concomitant with its phosphorylation. This Acidovorax sp. (strain JS42) protein is Isocitrate dehydrogenase kinase/phosphatase.